Consider the following 266-residue polypeptide: MPDYLDDLRLAHVLADAADAATMDRFKALDLKVETKPDMTPVSEADKAAEELIRGHLSRARPRDSVHGEEFGVAGTGPRRWVIDPIDGTKNYVRGVPVWATLIALMEAKEGGYQPVVGLVSAPALGRRWWAVEDHGAFTGRSLTSAHRLHVSQVSTLSDASFAYSSLSGWEEQGRLDGFLDLTREVWRTRAYGDFWPYMMVAEGSVDLCAEPELSLWDMAANAIIVTEAGGTFTGLDGRPGPHSGNAAASNGRLHDELLGYLNQRY.

Residues Glu-69, Asp-84, Ile-86, and Asp-87 each contribute to the Mg(2+) site. Glu-69 is a substrate binding site. Substrate-binding positions include 86–89 (IDGT), Arg-190, and Asp-218. Asp-218 provides a ligand contact to Mg(2+).

Belongs to the inositol monophosphatase superfamily. Requires Mg(2+) as cofactor.

The enzyme catalyses L-histidinol phosphate + H2O = L-histidinol + phosphate. It participates in amino-acid biosynthesis; L-histidine biosynthesis; L-histidine from 5-phospho-alpha-D-ribose 1-diphosphate: step 8/9. Its function is as follows. Catalyzes the dephosphorylation of histidinol-phosphate to histidinol, the direct precursor of histidine. This is Histidinol-phosphatase from Streptomyces coelicolor (strain ATCC BAA-471 / A3(2) / M145).